The primary structure comprises 381 residues: Acetyl-CoA:oxalate CoA-transferase (381 aa).

Residue histidine 233 is part of the active site.

It belongs to the CoA-transferase III family. Homodimer.

The catalysed reaction is oxalate + acetyl-CoA = oxalyl-CoA + acetate. Functionally, involved in the catabolism of oxalate and in the adapatation to low pH. ACOCT serves to prime the oxalate-induced acid tolerance response (ATR) cycle by producing substrate for oxalyl-CoA decarboxylase (OXC) and formyl-coenzyme A transferase (FCOCT). Catalyzes the reversible conversion of acetyl-CoA and oxalate to oxalyl-CoA and acetate. It can also use formyl-CoA and oxalate to produce oxalyl-CoA and formate with significantly reduced specific activity. The sequence is that of Acetyl-CoA:oxalate CoA-transferase (yfdE) from Escherichia coli (strain K12).